The following is a 244-amino-acid chain: Thaumatin-like protein 1 (244 aa).

The signal sequence occupies residues 1–22; sequence MKFEALIGLVLVFLSEHAGVYS. Cystine bridges form between cysteine 31-cysteine 243, cysteine 79-cysteine 89, cysteine 94-cysteine 101, cysteine 149-cysteine 232, cysteine 154-cysteine 215, cysteine 162-cysteine 178, cysteine 182-cysteine 191, and cysteine 192-cysteine 202. The N-linked (GlcNAc...) asparagine glycan is linked to asparagine 150.

This sequence belongs to the thaumatin family. In terms of processing, N-glycosylated. Style.

It is found in the secreted. The chain is Thaumatin-like protein 1 (TL1) from Pyrus pyrifolia (Chinese pear).